Here is a 575-residue protein sequence, read N- to C-terminus: Serine/threonine-protein kinase STY46 (575 aa).

Positions 116–140 are disordered; the sequence is ADLDSTSNDAGHSSPTRKSIHPPPA. Over residues 118–132 the composition is skewed to polar residues; it reads LDSTSNDAGHSSPTR. The ACT domain occupies 178 to 252; it reads EITFSTEDKP…AKIELQSQSW (75 aa). A Protein kinase domain is found at 290-543; that stretch reads LKFGHKIASG…EIIEQLQEIA (254 aa). ATP-binding positions include 296 to 304 and Lys317; that span reads IASGSYGDL. Asp411 (proton acceptor) is an active-site residue. Thr443 bears the Phosphothreonine mark.

It belongs to the protein kinase superfamily. Ser/Thr protein kinase family. In terms of processing, autophosphorylated on serine and threonine residues. Autophosphorylated at Thr-443.

It is found in the cytoplasm. Its subcellular location is the cytosol. The enzyme catalyses L-seryl-[protein] + ATP = O-phospho-L-seryl-[protein] + ADP + H(+). It catalyses the reaction L-threonyl-[protein] + ATP = O-phospho-L-threonyl-[protein] + ADP + H(+). Activated by autophosphorylation at Thr-443. Its function is as follows. Serine/threonine protein kinase that specifically phosphorylates chloroplast precursor proteins in the cytosol within the cleavable presequences (transit peptides). May be part of a cytosolic regulatory network involved in chloroplast protein import. Does not phosphorylate mitochondrion precursor proteins. Specific for ATP and does not utilize other NTPs. Plays a role in chloroplast biogenesis and differentiation in cotyledons, possibly through phosphorylation of chloroplast preproteins. The protein is Serine/threonine-protein kinase STY46 of Arabidopsis thaliana (Mouse-ear cress).